The chain runs to 290 residues: Malonyl-[acyl-carrier protein] O-methyltransferase (290 aa).

It belongs to the methyltransferase superfamily.

The catalysed reaction is malonyl-[ACP] + S-adenosyl-L-methionine = malonyl-[ACP] methyl ester + S-adenosyl-L-homocysteine. Its pathway is cofactor biosynthesis; biotin biosynthesis. Its function is as follows. Converts the free carboxyl group of a malonyl-thioester to its methyl ester by transfer of a methyl group from S-adenosyl-L-methionine (SAM). It allows to synthesize pimeloyl-ACP via the fatty acid synthetic pathway. This chain is Malonyl-[acyl-carrier protein] O-methyltransferase, found in Gallionella capsiferriformans (strain ES-2) (Gallionella ferruginea capsiferriformans (strain ES-2)).